The chain runs to 297 residues: Protease HtpX homolog (297 aa).

2 helical membrane-spanning segments follow: residues 14–34 (IFLI…AGYL) and 39–59 (YQFG…SMIF). Zn(2+) is bound at residue His143. Residue Glu144 is part of the active site. His147 serves as a coordination point for Zn(2+). Helical transmembrane passes span 153-173 (IRIS…ASMG) and 196-216 (IVFL…ASMV). Glu225 contacts Zn(2+).

Belongs to the peptidase M48B family. It depends on Zn(2+) as a cofactor.

The protein resides in the cell membrane. The protein is Protease HtpX homolog of Streptococcus uberis (strain ATCC BAA-854 / 0140J).